Here is a 399-residue protein sequence, read N- to C-terminus: Elongation factor Tu (399 aa).

Residues 10 to 209 (KPHVNIGTIG…AVDEYIPTPE (200 aa)) enclose the tr-type G domain. The tract at residues 19-26 (GHVDHGKT) is G1. 19–26 (GHVDHGKT) lines the GTP pocket. Position 26 (Thr26) interacts with Mg(2+). The segment at 60-64 (GITIN) is G2. Residues 81–84 (DCPG) are G3. GTP contacts are provided by residues 81–85 (DCPGH) and 136–139 (NKMD). Positions 136 to 139 (NKMD) are G4. The tract at residues 174–176 (SAL) is G5.

It belongs to the TRAFAC class translation factor GTPase superfamily. Classic translation factor GTPase family. EF-Tu/EF-1A subfamily. As to quaternary structure, monomer.

Its subcellular location is the cytoplasm. It catalyses the reaction GTP + H2O = GDP + phosphate + H(+). GTP hydrolase that promotes the GTP-dependent binding of aminoacyl-tRNA to the A-site of ribosomes during protein biosynthesis. The protein is Elongation factor Tu of Nautilia profundicola (strain ATCC BAA-1463 / DSM 18972 / AmH).